The sequence spans 58 residues: uncharacterized protein (58 aa).

The chain crosses the membrane as a helical span at residues 18–38 (WLMIVLLFCSTGMVFLATILE).

The protein resides in the membrane. This is an uncharacterized protein from Saccharomyces cerevisiae (strain ATCC 204508 / S288c) (Baker's yeast).